Reading from the N-terminus, the 348-residue chain is D-alanine--D-alanine ligase (348 aa).

In terms of domain architecture, ATP-grasp spans 132 to 334 (KRVLESIGIP…YPDLIEVLVT (203 aa)). Residue 162-217 (LARLTFPIFVKPANMGSSVGISKAQTKVELRKAIQLALTYDSRVLIEQGVVAREIE) coordinates ATP. Mg(2+) is bound by residues Asp-288, Glu-301, and Asn-303.

This sequence belongs to the D-alanine--D-alanine ligase family. Requires Mg(2+) as cofactor. It depends on Mn(2+) as a cofactor.

The protein localises to the cytoplasm. It catalyses the reaction 2 D-alanine + ATP = D-alanyl-D-alanine + ADP + phosphate + H(+). It functions in the pathway cell wall biogenesis; peptidoglycan biosynthesis. Functionally, cell wall formation. In Streptococcus pyogenes serotype M2 (strain MGAS10270), this protein is D-alanine--D-alanine ligase.